The chain runs to 167 residues: MIPTDTAPPSKPAQGHKGYKNRRRLSRELALQGIYQWRLAGGNAQEIDLQLQQVNFYSKADGSYFSDLLQGVLEHSRDLEAQIQAYLDRQLAELSPVECSILLIGTYEMVHHPEIPCRAIINEAIELAKSYGGTDGHKYVNGVLDKLAAQLRAVELQSSPVRNKDPH.

Positions 1–21 (MIPTDTAPPSKPAQGHKGYKN) are disordered.

Belongs to the NusB family.

In terms of biological role, involved in transcription antitermination. Required for transcription of ribosomal RNA (rRNA) genes. Binds specifically to the boxA antiterminator sequence of the ribosomal RNA (rrn) operons. This is Transcription antitermination protein NusB from Nitrosomonas eutropha (strain DSM 101675 / C91 / Nm57).